Reading from the N-terminus, the 350-residue chain is Protein RecA (350 aa).

Residue 67 to 74 (GPESSGKT) participates in ATP binding.

This sequence belongs to the RecA family.

It localises to the cytoplasm. Functionally, can catalyze the hydrolysis of ATP in the presence of single-stranded DNA, the ATP-dependent uptake of single-stranded DNA by duplex DNA, and the ATP-dependent hybridization of homologous single-stranded DNAs. It interacts with LexA causing its activation and leading to its autocatalytic cleavage. In Wolinella succinogenes (strain ATCC 29543 / DSM 1740 / CCUG 13145 / JCM 31913 / LMG 7466 / NCTC 11488 / FDC 602W) (Vibrio succinogenes), this protein is Protein RecA.